Here is a 543-residue protein sequence, read N- to C-terminus: MVLTFMTATRRRPVVLIVRDGWGQNPDPKWNESNAVHLANTPVDDKLTQEYPSVLIHTSGEDVGLPAGVMGNSEVGHQNIGAGRIVDQEVMRITRAIRDDSFFSNPVVTGAIDHVKKSGGRLHLLGLMSDGRVHSDLQHGIAVIDLAKRNGLTGDQLAIHAITDGRDTSPRGGLKFVSQLTDHCEASGVGVVASVIGRFYAMDRDLRWERVEAAYNLMTQGTGQTFPSASAAIESYYANPTESSRDGDEFITASSIVPEGGSPITVQPGDAVLFMNYRGDRTREITKAFTFDDAAWKDIPGGGFDRGKKIDNLYFATMTGYETGLPVKVIFEKPAKMPNILGEYVASKGLHQFRCAETEKYPHVTFFFNDYRDNPFEEEEWGMAPSPRDVSTYDQKPEMSAEDITEKVLKQIKSGKCDMIIVNYANGDMVGHTGVLEAAIKAVEKVDACVGRVVDATLAAGGSLVVTADHGNCEQMIDPETGGPHTAHTTYQVPLIVVDPEFVGKPLREGGRLADIAPTVLALMGLEVPPEMTGRPLMETQTA.

Positions 20 and 73 each coordinate Mn(2+). The active-site Phosphoserine intermediate is the S73. Substrate contacts are provided by residues H134, R166–D167, R198, R204, R278–R281, and K360. Residues D428, H432, D469, H470, and H488 each contribute to the Mn(2+) site.

It belongs to the BPG-independent phosphoglycerate mutase family. In terms of assembly, monomer. Requires Mn(2+) as cofactor.

It carries out the reaction (2R)-2-phosphoglycerate = (2R)-3-phosphoglycerate. It functions in the pathway carbohydrate degradation; glycolysis; pyruvate from D-glyceraldehyde 3-phosphate: step 3/5. Its function is as follows. Catalyzes the interconversion of 2-phosphoglycerate and 3-phosphoglycerate. The sequence is that of 2,3-bisphosphoglycerate-independent phosphoglycerate mutase from Rhodopirellula baltica (strain DSM 10527 / NCIMB 13988 / SH1).